Reading from the N-terminus, the 194-residue chain is Probable RNA 2'-phosphotransferase (194 aa).

It belongs to the KptA/TPT1 family.

Its function is as follows. Removes the 2'-phosphate from RNA via an intermediate in which the phosphate is ADP-ribosylated by NAD followed by a presumed transesterification to release the RNA and generate ADP-ribose 1''-2''-cyclic phosphate (APPR&gt;P). May function as an ADP-ribosylase. The chain is Probable RNA 2'-phosphotransferase from Burkholderia lata (strain ATCC 17760 / DSM 23089 / LMG 22485 / NCIMB 9086 / R18194 / 383).